The following is a 74-amino-acid chain: Protein kish-B (74 aa).

The N-terminal stretch at 1–22 (MTNVYSFDGILVFGLLFICTCA) is a signal peptide. Topologically, residues 23–52 (YLKKVPRLNSWLLSEKKGVWGVFYKAAVIG) are extracellular. A helical transmembrane segment spans residues 53-73 (TRLHVVVAASCLCMAFYLIFL). Lys74 is a topological domain (cytoplasmic).

It belongs to the KISH family.

It localises to the golgi apparatus membrane. In terms of biological role, involved in the early part of the secretory pathway. This chain is Protein kish-B (tmem167b), found in Danio rerio (Zebrafish).